Here is a 707-residue protein sequence, read N- to C-terminus: Acyl-CoA ligase 891, peroxisomal (707 aa).

259–270 is an ATP binding site; sequence INYTSGTTGPPK. Positions 525–549 are fatty acid-binding; the sequence is DGWFRTGDVCTIDEKGRFIIIDRRK. Positions 705–707 match the Peroxisome targeting signal motif; the sequence is AKL.

Belongs to the ATP-dependent AMP-binding enzyme family.

Its subcellular location is the peroxisome matrix. It catalyses the reaction (4E,8E)-10-(4-hydroxy-6-methoxy-7-methyl-3-oxo-1,3-dihydro-2-benzofuran-5-yl)-4,8-dimethyldeca-4,8-dienoate + ATP + CoA = (4E,8E)-10-(4-hydroxy-6-methoxy-7-methyl-3-oxo-1,3-dihydro-2-benzofuran-5-yl)-4,8-dimethyldeca-4,8-dienoyl-CoA + AMP + diphosphate. Its pathway is secondary metabolite biosynthesis; terpenoid biosynthesis. Acyl-CoA ligase involved in the biosynthesis of mycophenolic acid (MPA), the first isolated antibiotic natural product in the world obtained from a culture of Penicillium brevicompactum in 1893. The peroxisomal acyl-CoA ligase 891 converts the intermediate MFDHMP-3C into MFDHMP-3C-CoA which impairs its diffusion from the peroxisome. The first step of the pathway is the synthesis of 5-methylorsellinic acid (5MOA) by the cytosolic polyketide synthase mpaC. 5MOA is then converted to the phthalide compound 5,7-dihydroxy-4,6-dimethylphthalide (DHMP) by the endoplasmic reticulum-bound cytochrome P450 monooxygenase mpaDE. MpaDE first catalyzes hydroxylation of 5-MOA to 4,6-dihydroxy-2-(hydroxymethyl)-3-methylbenzoic acid (DHMB). MpaDE then acts as a lactone synthase that catalyzes the ring closure to convert DHMB into DHMP. The next step is the prenylation of DHMP by the Golgi apparatus-associated prenyltransferase mpaA to yield farnesyl-DHMP (FDHMP). The ER-bound oxygenase mpaB then mediates the oxidative cleavage the C19-C20 double bond in FDHMP to yield FDHMP-3C via a mycophenolic aldehyde intermediate. The O-methyltransferase mpaG catalyzes the methylation of FDHMP-3C to yield MFDHMP-3C. After the cytosolic methylation of FDHMP-3C, MFDHMP-3C enters into peroxisomes probably via free diffusion due to its low molecular weight. Upon a peroxisomal CoA ligation reaction, catalyzed by a beta-oxidation component enzyme acyl-CoA ligase ACL891, MFDHMP-3C-CoA would then be restricted to peroxisomes for the following beta-oxidation pathway steps. The peroxisomal beta-oxidation machinery than converts MFDHMP-3C-CoA into MPA_CoA, via a beta-oxidation chain-shortening process. Finally mpaH acts as a peroxisomal acyl-CoA hydrolase with high substrate specificity toward MPA-CoA to release the final product MPA. The chain is Acyl-CoA ligase 891, peroxisomal from Penicillium roqueforti (strain FM164).